The sequence spans 716 residues: Exocyst complex component 8 (716 aa).

Position 15 is a phosphoserine (Ser-15). Residues 110 to 119 (STGEDTAGAG) are compositionally biased toward low complexity. The segment at 110–149 (STGEDTAGAGPRERGAAQAGFLPGPAGVPREGPGTGEEGK) is disordered. The PH domain occupies 173-273 (YLVYNGDLVE…WLEVLEETKR (101 aa)). A compositionally biased stretch (basic and acidic residues) spans 275 to 284 (LSDKRRREQE). The disordered stretch occupies residues 275–319 (LSDKRRREQEEAAALRAPPPVTSKGSNPFEDEAEEELATPEAEEE). Residues 303–319 (FEDEAEEELATPEAEEE) show a composition bias toward acidic residues. Thr-313 bears the Phosphothreonine mark.

The protein belongs to the EXO84 family. The exocyst complex is composed of EXOC1, EXOC2, EXOC3, EXOC4, EXOC5, EXOC6, EXOC7 and EXOC8. Interacts (via PH domain) with GTP-bound RALA and RALB. Interacts with SH3BP1; required for the localization of both SH3BP1 and the exocyst to the leading edge of migrating cells.

It localises to the cytoplasm. It is found in the perinuclear region. The protein resides in the cell projection. Its subcellular location is the growth cone. Functionally, component of the exocyst complex involved in the docking of exocytic vesicles with fusion sites on the plasma membrane. This Rattus norvegicus (Rat) protein is Exocyst complex component 8 (Exoc8).